A 518-amino-acid polypeptide reads, in one-letter code: 12S seed storage globulin 2 (518 aa).

Residues Met-1–Ala-24 form the signal peptide. Disulfide bonds link Cys-45/Cys-78 and Cys-121/Cys-324. Positions Leu-50–Gln-240 constitute a Cupin type-1 1 domain. Residues Ile-280–Ser-311 form a disordered region. The Cupin type-1 2 domain maps to Gln-330–Gln-479. Residues Lys-482 to Glu-518 form a disordered region. The segment covering Lys-495–Glu-518 has biased composition (polar residues).

This sequence belongs to the 11S seed storage protein (globulins) family. As to quaternary structure, hexamer; each subunit is composed of an acidic and a basic chain derived from a single precursor and linked by a disulfide bond.

This is a seed storage protein. The chain is 12S seed storage globulin 2 from Avena sativa (Oat).